The following is a 691-amino-acid chain: ATP-dependent zinc metalloprotease FtsH 2 (691 aa).

A disordered region spans residues 1–48 (MTDEPQSDEQQTTEQERPLGTKRATRADGLRRPGVRSGLAERRSPAAD). Residues 1 to 64 (MTDEPQSDEQ…AAVRRFLLRD (64 aa)) lie on the Cytoplasmic side of the membrane. The segment covering 14–31 (EQERPLGTKRATRADGLR) has biased composition (basic and acidic residues). The chain crosses the membrane as a helical span at residues 65–85 (VFALGLMIAALVIVILFFTLL). The Extracellular segment spans residues 86 to 168 (GATKPTSSGT…AVKQQPGKAQ (83 aa)). The helical transmembrane segment at 169–189 (VTIVVQFLLPILLLVCLFALF) threads the bilayer. Topologically, residues 190–691 (MRIGQDGGAG…ERGSARDRDA (502 aa)) are cytoplasmic. 265 to 272 (GPPGTGKT) is an ATP binding site. Residue His-486 coordinates Zn(2+). The active site involves Glu-487. Residues His-490 and Asp-563 each coordinate Zn(2+).

In the central section; belongs to the AAA ATPase family. This sequence in the C-terminal section; belongs to the peptidase M41 family. As to quaternary structure, homohexamer. Requires Zn(2+) as cofactor.

It is found in the cell membrane. Functionally, acts as a processive, ATP-dependent zinc metallopeptidase for both cytoplasmic and membrane proteins. Plays a role in the quality control of integral membrane proteins. The polypeptide is ATP-dependent zinc metalloprotease FtsH 2 (Conexibacter woesei (strain DSM 14684 / CCUG 47730 / CIP 108061 / JCM 11494 / NBRC 100937 / ID131577)).